The following is a 380-amino-acid chain: MAPNIRKSHPLLKMVNNSLIDLPAPSNISAWWNFGSLLGVCLLTQILTGLLLAMHYTADTTLAFSSVAHTCRNVQYGWLIRNLHANGASFFFICIYLHIGRGFYYGSYLYKETWNTGVILLLTLMATAFVGYVLPWGQMSFWGATVITNLFSAIPYIGQTLVEWAWGGFSVDNPTLTRFFALHFLLPFMIAGLTLIHLTFLHESGSNNPLGIVSNCDKIPFHPYFTLKDILGFMLMFLPLTTLALFSPNLLGDPENFTPANPLVTPPHIKPEWYFLFAYAILRSIPNKLGGVLALAASVLVLFLAPFLHKAKQRAMTFRPLSQLLFWILVANLFILTWVGSQPVEHPFIIIGQLASLTYFTILLILFPITGALENKMLNY.

The next 4 helical transmembrane spans lie at 34–54, 78–99, 114–134, and 179–199; these read FGSLLGVCLLTQILTGLLLAM, WLIRNLHANGASFFFICIYLHI, WNTGVILLLTLMATAFVGYVL, and FFALHFLLPFMIAGLTLIHLT. The heme b site is built by histidine 84 and histidine 98. Residues histidine 183 and histidine 197 each coordinate heme b. Histidine 202 contacts a ubiquinone. The next 4 membrane-spanning stretches (helical) occupy residues 227 to 247, 289 to 309, 321 to 341, and 348 to 368; these read LKDILGFMLMFLPLTTLALFS, LGGVLALAASVLVLFLAPFLH, LSQLLFWILVANLFILTWVGS, and FIIIGQLASLTYFTILLILFP.

Belongs to the cytochrome b family. As to quaternary structure, the cytochrome bc1 complex contains 11 subunits: 3 respiratory subunits (MT-CYB, CYC1 and UQCRFS1), 2 core proteins (UQCRC1 and UQCRC2) and 6 low-molecular weight proteins (UQCRH/QCR6, UQCRB/QCR7, UQCRQ/QCR8, UQCR10/QCR9, UQCR11/QCR10 and a cleavage product of UQCRFS1). This cytochrome bc1 complex then forms a dimer. The cofactor is heme b.

The protein localises to the mitochondrion inner membrane. Component of the ubiquinol-cytochrome c reductase complex (complex III or cytochrome b-c1 complex) that is part of the mitochondrial respiratory chain. The b-c1 complex mediates electron transfer from ubiquinol to cytochrome c. Contributes to the generation of a proton gradient across the mitochondrial membrane that is then used for ATP synthesis. The chain is Cytochrome b (MT-CYB) from Calonectris leucomelas (Streaked shearwater).